Here is a 437-residue protein sequence, read N- to C-terminus: Branched-chain amino acid transport system 2 carrier protein (437 aa).

12 helical membrane passes run 9 to 29 (LLAL…IIFP), 43 to 63 (AAFG…VALA), 80 to 100 (AGVA…ATPR), 117 to 137 (GGVP…FLVL), 149 to 169 (VITP…IFAP), 192 to 212 (GYLT…ATAI), 228 to 248 (MIAG…LFYL), 280 to 300 (LLLA…LITA), 308 to 328 (LLPV…LLVA), 335 to 355 (LISL…VLIA), 369 to 389 (VFVP…LGAA), and 404 to 424 (LADQ…LAVV).

This sequence belongs to the branched chain amino acid transporter family.

The protein resides in the cell inner membrane. Component of the LIV-II transport system for branched-chain amino acids. BraB is specific for isoleucine, leucine and valine. The LIV-II transport system is coupled to sodium and lithium ions. In Pseudomonas aeruginosa (strain ATCC 15692 / DSM 22644 / CIP 104116 / JCM 14847 / LMG 12228 / 1C / PRS 101 / PAO1), this protein is Branched-chain amino acid transport system 2 carrier protein (braB).